The following is a 223-amino-acid chain: MFKPKAIAVDIDGTLTDRKRALNCRAVEALRKVKIPVILATGNISCFARAAAKLIGVSDVVICENGGVVRFEYDGEDIVLGDKEKCVEAVRVLEKHYEVELLDFEYRKSEVCMRRSFDINEARKLIEGMGVKLVDSGFAYHIMDADVSKGKALKFVAERLGISSAEFAVIGDSENDIDMFRVAGFGIAVANADERLKEYADLVTPSPDGEGVVEALQFLGLLR.

The active-site Nucleophile is the Asp-10. Mg(2+) contacts are provided by Asp-10 and Asp-12. Residue Lys-149 participates in substrate binding. Mg(2+)-binding residues include Asp-172 and Asp-176.

The protein belongs to the archaeal SPP-like hydrolase family. The cofactor is Mg(2+).

It catalyses the reaction 2-phosphoglycolate + H2O = glycolate + phosphate. Functionally, catalyzes the dephosphorylation of 2-phosphoglycolate. In Archaeoglobus fulgidus (strain ATCC 49558 / DSM 4304 / JCM 9628 / NBRC 100126 / VC-16), this protein is Phosphoglycolate phosphatase.